Here is a 296-residue protein sequence, read N- to C-terminus: UDP-N-acetylglucosamine transporter TMEM241 (296 aa).

10 consecutive transmembrane segments (helical) span residues 7–29, 32–52, 67–87, 93–113, 121–141, 146–166, 187–207, 211–231, 250–270, and 271–291; these read LVGL…VLSV, FTYP…LLHV, SHVL…YAGS, LAIP…CGYQ, TSPA…CLPF, FNPD…AYKI, IFSV…FSVL, FLYF…GFFL, WIFF…DAIL, and TSAT…LVFS.

It belongs to the nucleotide-sugar transporter family. SLC35A subfamily.

The protein resides in the golgi apparatus. It localises to the cis-Golgi network membrane. Golgi-localized UDP-N-acetylglucosamine (UDP-GlcNAc) transporter that transports UDP-N-acetylglucosamine into Golgi lumen. Contributes to lysosomal targeting of NPC2, a key protein required for lysosomal cholesterol exiting, and that utilizes the mannose-6-phosphate (M6P) modification pathway for its lysosomal targeting. This Homo sapiens (Human) protein is UDP-N-acetylglucosamine transporter TMEM241.